The sequence spans 364 residues: Biotin synthase (364 aa).

Residues 14–36 (DTIPPGTETPYASPSHARTEEAP) form a disordered region. A Radical SAM core domain is found at 70–308 (RKGPLATTCG…QRDILVCGGR (239 aa)). The [4Fe-4S] cluster site is built by Cys-88, Cys-92, and Cys-95. [2Fe-2S] cluster is bound by residues Cys-164 and Cys-233.

This sequence belongs to the radical SAM superfamily. Biotin synthase family. As to quaternary structure, homodimer. [4Fe-4S] cluster is required as a cofactor. [2Fe-2S] cluster serves as cofactor.

The catalysed reaction is (4R,5S)-dethiobiotin + (sulfur carrier)-SH + 2 reduced [2Fe-2S]-[ferredoxin] + 2 S-adenosyl-L-methionine = (sulfur carrier)-H + biotin + 2 5'-deoxyadenosine + 2 L-methionine + 2 oxidized [2Fe-2S]-[ferredoxin]. It functions in the pathway cofactor biosynthesis; biotin biosynthesis; biotin from 7,8-diaminononanoate: step 2/2. Catalyzes the conversion of dethiobiotin (DTB) to biotin by the insertion of a sulfur atom into dethiobiotin via a radical-based mechanism. The chain is Biotin synthase from Nitratidesulfovibrio vulgaris (strain DSM 19637 / Miyazaki F) (Desulfovibrio vulgaris).